Here is a 239-residue protein sequence, read N- to C-terminus: Octanoyltransferase (239 aa).

Residues 48–236 enclose the BPL/LPL catalytic domain; that stretch reads EGGDELVWLV…AFETVFGETT (189 aa). Substrate is bound by residues 87–94, 167–169, and 180–182; these read RGGEYTYH, ALG, and GLS. C198 acts as the Acyl-thioester intermediate in catalysis.

It belongs to the LipB family.

The protein localises to the cytoplasm. It catalyses the reaction octanoyl-[ACP] + L-lysyl-[protein] = N(6)-octanoyl-L-lysyl-[protein] + holo-[ACP] + H(+). It functions in the pathway protein modification; protein lipoylation via endogenous pathway; protein N(6)-(lipoyl)lysine from octanoyl-[acyl-carrier-protein]: step 1/2. Its function is as follows. Catalyzes the transfer of endogenously produced octanoic acid from octanoyl-acyl-carrier-protein onto the lipoyl domains of lipoate-dependent enzymes. Lipoyl-ACP can also act as a substrate although octanoyl-ACP is likely to be the physiological substrate. The protein is Octanoyltransferase of Rhizobium etli (strain ATCC 51251 / DSM 11541 / JCM 21823 / NBRC 15573 / CFN 42).